A 192-amino-acid polypeptide reads, in one-letter code: CASP-like protein 4C1 (192 aa).

Polar residues predominate over residues 1-11 (MRSPQSLRNGE). A disordered region spans residues 1 to 23 (MRSPQSLRNGETPSPSPRPPRFP). Residues 1-40 (MRSPQSLRNGETPSPSPRPPRFPTPHFHSTVSLQKLKRFN) lie on the Cytoplasmic side of the membrane. Pro residues predominate over residues 14 to 23 (SPSPRPPRFP). The helical transmembrane segment at 41–61 (LLILVFRLSTFCFSLASSVFM) threads the bilayer. Residues 62-75 (LTNPTWYHFDAFRY) lie on the Extracellular side of the membrane. A helical membrane pass occupies residues 76 to 96 (VFAANAIVAIYSLFEMAASVW). Residues 97–107 (EISRGNTLFPE) lie on the Cytoplasmic side of the membrane. The chain crosses the membrane as a helical span at residues 108-128 (ILQVWFDFGHDQVFAYLLLSA). At 129–156 (DSAATALAKTLKGGDTCAASNAFCVQSY) the chain is on the extracellular side. Residues 157–177 (IAIALGFAGFLFLGLSSLLSG) form a helical membrane-spanning segment. Topologically, residues 178-192 (FRVVCFLINGSRFYV) are cytoplasmic.

It belongs to the Casparian strip membrane proteins (CASP) family. As to quaternary structure, homodimer and heterodimers.

It is found in the cell membrane. This chain is CASP-like protein 4C1, found in Ricinus communis (Castor bean).